The chain runs to 220 residues: MKFEKYIDHTLLKPESTRTQIDQIIDEAKAYNFKSVCVNPTHVKYAAERLADSEVLVCTVIGFPLGASTTATKAFETEDAIQNGADEIDMVINIGALKDGRFDDVQQDIEAVVKAAKGHTVKVIIETVLLDHDEIVKASELTKAAGADFVKTSTGFAGGGATAEDVKLMKDTVGADVEVKASGGVRNLEDFNKMVEAGATRIGASAGVQIMQGLEADSDY.

The active-site Proton donor/acceptor is the aspartate 89. Residue lysine 151 is the Schiff-base intermediate with acetaldehyde of the active site. Lysine 180 functions as the Proton donor/acceptor in the catalytic mechanism.

It belongs to the DeoC/FbaB aldolase family. DeoC type 1 subfamily.

The protein resides in the cytoplasm. It catalyses the reaction 2-deoxy-D-ribose 5-phosphate = D-glyceraldehyde 3-phosphate + acetaldehyde. It functions in the pathway carbohydrate degradation; 2-deoxy-D-ribose 1-phosphate degradation; D-glyceraldehyde 3-phosphate and acetaldehyde from 2-deoxy-alpha-D-ribose 1-phosphate: step 2/2. Functionally, catalyzes a reversible aldol reaction between acetaldehyde and D-glyceraldehyde 3-phosphate to generate 2-deoxy-D-ribose 5-phosphate. This chain is Deoxyribose-phosphate aldolase 1, found in Staphylococcus aureus (strain COL).